The following is a 239-amino-acid chain: Skn-1 dependent zygotic transcript 1 protein (239 aa).

In terms of tissue distribution, expressed in mesendodermal precursor cells of embryos.

Its function is as follows. May have a role in mesendoderm development during embryogenesis. In Caenorhabditis elegans, this protein is Skn-1 dependent zygotic transcript 1 protein (sdz-1).